The following is a 184-amino-acid chain: MSCRSEHIWIELIVGSRKISNFCWAFILFLGSLGFVLVGSSSYLGKNLISLVPSQQILFFPQGIVMSFYGIAGLFISSYLWCTISWNVGSGYDRFDRKEGIVCIFRWGFPGKNRRIFLRFRMKDIQSIRIEVKEGISARRVLYMEIKGQGAVPLTRTDENLTPREIEQKAAELAYFLRVPIEVF.

2 helical membrane-spanning segments follow: residues 19–39 and 57–77; these read ISNF…VLVG and ILFF…LFIS.

The protein belongs to the Ycf4 family.

Its subcellular location is the plastid. The protein resides in the chloroplast thylakoid membrane. In terms of biological role, seems to be required for the assembly of the photosystem I complex. This Eucalyptus globulus subsp. globulus (Tasmanian blue gum) protein is Photosystem I assembly protein Ycf4.